A 159-amino-acid chain; its full sequence is Phosphopantetheine adenylyltransferase (159 aa).

Thr-10 is a binding site for substrate. ATP-binding positions include 10–11 (TF) and His-18. Positions 42, 74, and 88 each coordinate substrate. Residues 89 to 91 (GLR), Glu-99, and 124 to 130 (WSFISSS) each bind ATP.

The protein belongs to the bacterial CoaD family. As to quaternary structure, homohexamer. Requires Mg(2+) as cofactor.

The protein localises to the cytoplasm. The enzyme catalyses (R)-4'-phosphopantetheine + ATP + H(+) = 3'-dephospho-CoA + diphosphate. It functions in the pathway cofactor biosynthesis; coenzyme A biosynthesis; CoA from (R)-pantothenate: step 4/5. Reversibly transfers an adenylyl group from ATP to 4'-phosphopantetheine, yielding dephospho-CoA (dPCoA) and pyrophosphate. The sequence is that of Phosphopantetheine adenylyltransferase from Shigella sonnei (strain Ss046).